The sequence spans 452 residues: MVGKIGFVSLGCPKALVDSELILTQLSAEGYETAKDYSGADLVVVNTCGFIDSAVEESLSAIGEALAENGKVIVTGCLGARKNADGSDLILSIHPKVLAVTGPHATDEVMQAIHLHLPKPHDPFTDLVPPAGVKLTPKHYAYLKISEGCNHRCTFCIIPSLRGDLVSRPIGEVLLEAKRLFESGVKELLVVSQDTSAYGVDIQYRTGFWDGKPVKTRMFDLVNALNQIAREHQAWVRLHYVYPYPHVDDILPLMAEFSEHGYGVLPYLDIPLQHAHPDVLKRMKRPASGEKNLERILAWREACPDLVIRSTFIAGFPGETEEEFEYLLNFLEEAQIDRAGCFAYSPVEGAKANELDNPVPDAVREERRARFMAKAEDISIKRLAKKIGKRVQVLIDRVDESGGIGRTIGDAPEIDGLVRVLPPTKPSKRYRTGEIIRATVISSQGHDLIAET.

The 116-residue stretch at 3–118 folds into the MTTase N-terminal domain; sequence GKIGFVSLGC…VMQAIHLHLP (116 aa). [4Fe-4S] cluster-binding residues include Cys12, Cys48, Cys77, Cys149, Cys153, and Cys156. The region spanning 135–381 is the Radical SAM core domain; the sequence is LTPKHYAYLK…MAKAEDISIK (247 aa). Positions 384 to 452 constitute a TRAM domain; sequence AKKIGKRVQV…SQGHDLIAET (69 aa).

It belongs to the methylthiotransferase family. RimO subfamily. Requires [4Fe-4S] cluster as cofactor.

The protein localises to the cytoplasm. The catalysed reaction is L-aspartate(89)-[ribosomal protein uS12]-hydrogen + (sulfur carrier)-SH + AH2 + 2 S-adenosyl-L-methionine = 3-methylsulfanyl-L-aspartate(89)-[ribosomal protein uS12]-hydrogen + (sulfur carrier)-H + 5'-deoxyadenosine + L-methionine + A + S-adenosyl-L-homocysteine + 2 H(+). Functionally, catalyzes the methylthiolation of an aspartic acid residue of ribosomal protein uS12. This Polynucleobacter asymbioticus (strain DSM 18221 / CIP 109841 / QLW-P1DMWA-1) (Polynucleobacter necessarius subsp. asymbioticus) protein is Ribosomal protein uS12 methylthiotransferase RimO.